Reading from the N-terminus, the 330-residue chain is MIQTIENRLINGGEPTFEEALLLASSADKEALYETAHRITRHFMGDKFDTCSIINAKSGNCPEDCKWCAQSRHYATSIEKYGLLSATVCAEQAAYNRRQGIGRFSLVASGRTASMNEIRQMAESFRTIKQRTDIKCCASLGLLSEEKLQILFDNGVTTYHCNMETAPSFFPSLCSTHTQEEKLATIRAARRVGMRVCSGGIIGMGETMEQRIEFAFFLHSINVYSIPINILQPIPGTPLEKTPPLSEEEYLTTVALFRLINPRAFLRFSGGRAQLSPAVQRKAIYIGINAAITGDLLTTTGSKAAEDMQLARECGFQVTNDTDWEVSYDH.

Positions 43–272 (FMGDKFDTCS…RAFLRFSGGR (230 aa)) constitute a Radical SAM core domain. Residues Cys-61, Cys-65, and Cys-68 each contribute to the [4Fe-4S] cluster site. Residues Ser-105, Cys-137, Cys-197, and Arg-267 each coordinate [2Fe-2S] cluster.

It belongs to the radical SAM superfamily. Biotin synthase family. In terms of assembly, homodimer. Requires [4Fe-4S] cluster as cofactor. [2Fe-2S] cluster serves as cofactor.

It catalyses the reaction (4R,5S)-dethiobiotin + (sulfur carrier)-SH + 2 reduced [2Fe-2S]-[ferredoxin] + 2 S-adenosyl-L-methionine = (sulfur carrier)-H + biotin + 2 5'-deoxyadenosine + 2 L-methionine + 2 oxidized [2Fe-2S]-[ferredoxin]. It participates in cofactor biosynthesis; biotin biosynthesis; biotin from 7,8-diaminononanoate: step 2/2. In terms of biological role, catalyzes the conversion of dethiobiotin (DTB) to biotin by the insertion of a sulfur atom into dethiobiotin via a radical-based mechanism. The sequence is that of Biotin synthase from Porphyromonas gingivalis (strain ATCC 33277 / DSM 20709 / CIP 103683 / JCM 12257 / NCTC 11834 / 2561).